The primary structure comprises 122 residues: Small ribosomal subunit protein uS13 (122 aa).

The disordered stretch occupies residues 94-122 (KKLPVRGQRTHTNARTRKGPAKPIAGKKK).

The protein belongs to the universal ribosomal protein uS13 family. As to quaternary structure, part of the 30S ribosomal subunit. Forms a loose heterodimer with protein S19. Forms two bridges to the 50S subunit in the 70S ribosome.

Functionally, located at the top of the head of the 30S subunit, it contacts several helices of the 16S rRNA. In the 70S ribosome it contacts the 23S rRNA (bridge B1a) and protein L5 of the 50S subunit (bridge B1b), connecting the 2 subunits; these bridges are implicated in subunit movement. Contacts the tRNAs in the A and P-sites. This is Small ribosomal subunit protein uS13 from Hyphomonas neptunium (strain ATCC 15444).